The primary structure comprises 356 residues: Histidinol-phosphate aminotransferase (356 aa).

Residue lysine 214 is modified to N6-(pyridoxal phosphate)lysine.

This sequence belongs to the class-II pyridoxal-phosphate-dependent aminotransferase family. Histidinol-phosphate aminotransferase subfamily. As to quaternary structure, homodimer. It depends on pyridoxal 5'-phosphate as a cofactor.

The catalysed reaction is L-histidinol phosphate + 2-oxoglutarate = 3-(imidazol-4-yl)-2-oxopropyl phosphate + L-glutamate. It functions in the pathway amino-acid biosynthesis; L-histidine biosynthesis; L-histidine from 5-phospho-alpha-D-ribose 1-diphosphate: step 7/9. The protein is Histidinol-phosphate aminotransferase of Escherichia coli (strain 55989 / EAEC).